The sequence spans 65 residues: MKAIILGIQNILEVLLEDIGILKMESIFLHTNITNIPHSVLYVSLSYYIINPCTSASSNLDDSFS.

This is an uncharacterized protein from Saccharomyces cerevisiae (strain ATCC 204508 / S288c) (Baker's yeast).